Consider the following 125-residue polypeptide: S-adenosylmethionine decarboxylase proenzyme (125 aa).

Serine 71 acts as the Schiff-base intermediate with substrate; via pyruvic acid in catalysis. Serine 71 is subject to Pyruvic acid (Ser); by autocatalysis. Histidine 76 serves as the catalytic Proton acceptor; for processing activity. The active-site Proton donor; for catalytic activity is cysteine 91.

The protein belongs to the prokaryotic AdoMetDC family. Type 1 subfamily. As to quaternary structure, heterotetramer of two alpha and two beta chains arranged as a dimer of alpha/beta heterodimers. The cofactor is pyruvate. In terms of processing, is synthesized initially as an inactive proenzyme. Formation of the active enzyme involves a self-maturation process in which the active site pyruvoyl group is generated from an internal serine residue via an autocatalytic post-translational modification. Two non-identical subunits are generated from the proenzyme in this reaction, and the pyruvate is formed at the N-terminus of the alpha chain, which is derived from the carboxyl end of the proenzyme. The post-translation cleavage follows an unusual pathway, termed non-hydrolytic serinolysis, in which the side chain hydroxyl group of the serine supplies its oxygen atom to form the C-terminus of the beta chain, while the remainder of the serine residue undergoes an oxidative deamination to produce ammonia and the pyruvoyl group blocking the N-terminus of the alpha chain.

The catalysed reaction is S-adenosyl-L-methionine + H(+) = S-adenosyl 3-(methylsulfanyl)propylamine + CO2. Its pathway is amine and polyamine biosynthesis; S-adenosylmethioninamine biosynthesis; S-adenosylmethioninamine from S-adenosyl-L-methionine: step 1/1. Catalyzes the decarboxylation of S-adenosylmethionine to S-adenosylmethioninamine (dcAdoMet), the propylamine donor required for the synthesis of the polyamines spermine and spermidine from the diamine putrescine. The polypeptide is S-adenosylmethionine decarboxylase proenzyme (Pyrobaculum aerophilum (strain ATCC 51768 / DSM 7523 / JCM 9630 / CIP 104966 / NBRC 100827 / IM2)).